Consider the following 212-residue polypeptide: Nitric oxide synthase (212 aa).

Y11 contacts heme b. Residues 30–50 are calmodulin-binding; that stretch reads KKRAIGFKKLAKAVKFSTKLM. A Flavodoxin-like domain is found at 60–212; it reads ATILYATETG…AVDTLLEELG (153 aa). The segment at 155-175 is disordered; the sequence is SYSDSRKSSSDEPEHKDNFES. Positions 158–173 are enriched in basic and acidic residues; it reads DSRKSSSDEPEHKDNF. An FMN-binding site is contributed by 186 to 212; sequence AFGLGSRAYPHFCAFARAVDTLLEELG.

The protein belongs to the NOS family. Heme b serves as cofactor. The cofactor is FAD. Requires FMN as cofactor.

It catalyses the reaction 2 L-arginine + 3 NADPH + 4 O2 + H(+) = 2 L-citrulline + 2 nitric oxide + 3 NADP(+) + 4 H2O. Its function is as follows. Produces nitric oxide (NO) which is a messenger molecule with diverse functions throughout the body. The protein is Nitric oxide synthase of Squalus acanthias (Spiny dogfish).